We begin with the raw amino-acid sequence, 40 residues long: Ice-structuring protein GS-8 (40 aa).

Met-1 carries the blocked amino end (Met) modification.

This sequence belongs to the type-I AFP family.

In terms of biological role, antifreeze proteins lower the blood freezing point. This chain is Ice-structuring protein GS-8, found in Myoxocephalus aenaeus (Grubby sculpin).